The following is a 350-amino-acid chain: Protein RecA (350 aa).

65-72 is an ATP binding site; the sequence is GPESSGKT. Positions 326 to 350 are disordered; the sequence is HNLKTRNTADSKVTGAKDEKSKEEK. Over residues 340–350 the composition is skewed to basic and acidic residues; sequence GAKDEKSKEEK.

Belongs to the RecA family.

The protein localises to the cytoplasm. Its function is as follows. Can catalyze the hydrolysis of ATP in the presence of single-stranded DNA, the ATP-dependent uptake of single-stranded DNA by duplex DNA, and the ATP-dependent hybridization of homologous single-stranded DNAs. It interacts with LexA causing its activation and leading to its autocatalytic cleavage. This chain is Protein RecA, found in Clostridium novyi (strain NT).